An 81-amino-acid chain; its full sequence is CLAVATA3/ESR (CLE)-related protein 25 (81 aa).

The signal sequence occupies residues 1–30 (MGGNGIRALVGVIASLGLIVFLLVGILANS). Positions 57–81 (KRKVPNGPDPIHNRKAETSRRPPRV) are disordered. A hydroxyproline mark is found at P61 and P64. P64 carries an O-linked (Ara...) hydroxyproline glycan. Residues 67-81 (IHNRKAETSRRPPRV) are compositionally biased toward basic and acidic residues.

It belongs to the CLV3/ESR signal peptide family. Post-translationally, the O-glycosylation (arabinosylation) of the hydroxyproline Pro-64 enhances binding affinity of the CLE25p peptide for its receptor. As to expression, mostly expressed in flowers and siliques, and, to a lower extent, in roots, stems, apex, seedlings, leaves and pollen.

The protein localises to the secreted. It is found in the extracellular space. Its function is as follows. Extracellular signal peptide that regulates cell fate. Represses root apical meristem maintenance. Regulates the transition of protophloem cells from proliferation to differentiation, thus impinging on postembryonic growth capacity of the root meristem; this signaling pathway requires CRN and CLV2. This chain is CLAVATA3/ESR (CLE)-related protein 25, found in Arabidopsis thaliana (Mouse-ear cress).